Here is a 154-residue protein sequence, read N- to C-terminus: Transcriptional regulator MraZ (154 aa).

2 consecutive SpoVT-AbrB domains span residues 6–53 and 83–126; these read NSEA…PENV and VEVI…SKEI.

It belongs to the MraZ family. Forms oligomers.

It is found in the cytoplasm. The protein localises to the nucleoid. The sequence is that of Transcriptional regulator MraZ from Phocaeicola vulgatus (strain ATCC 8482 / DSM 1447 / JCM 5826 / CCUG 4940 / NBRC 14291 / NCTC 11154) (Bacteroides vulgatus).